We begin with the raw amino-acid sequence, 369 residues long: uncharacterized protein (369 aa).

4 disordered regions span residues 1 to 42 (MRAA…NNNS), 60 to 107 (PSDL…KEDD), 146 to 177 (ALSMGRGDLDSESDISEKEDDNDGSFDGNSSG), and 214 to 369 (LSSH…GDDD). Polar residues predominate over residues 12-24 (VGPNNNNQSNTIN). Composition is skewed to low complexity over residues 30–42 (SNSNNINDNNNNS) and 70–86 (YHSNYNNNNNNNNNSSS). The span at 87–101 (AITSGTVAPSSSMNN) shows a compositional bias: polar residues. Acidic residues predominate over residues 155-169 (DSESDISEKEDDNDG). Low complexity predominate over residues 219–324 (NNNNNSSNNN…NNNNNNSNIY (106 aa)).

This is an uncharacterized protein from Dictyostelium discoideum (Social amoeba).